The chain runs to 403 residues: Alkaline protease 1 (403 aa).

The first 21 residues, 1-21 (MQSIKRTLLLLGALLPAALAA), serve as a signal peptide directing secretion. Positions 22–125 (PAREPHPSSN…QIWYLDALTT (104 aa)) are excised as a propeptide. The 85-residue stretch at 36–120 (KYIITFKSGI…HVEEDQIWYL (85 aa)) folds into the Inhibitor I9 domain. The Peptidase S8 domain occupies 130 to 403 (PWGLGSISHK…PNKLAYNGAA (274 aa)). Residues Asp-162 and His-193 each act as charge relay system in the active site. Asn-253 and Asn-307 each carry an N-linked (GlcNAc...) asparagine glycan. Ser-349 serves as the catalytic Charge relay system.

This sequence belongs to the peptidase S8 family.

The protein localises to the secreted. It catalyses the reaction Hydrolysis of proteins with broad specificity, and of Bz-Arg-OEt &gt; Ac-Tyr-OEt. Does not hydrolyze peptide amides.. Secreted alkaline protease that allows assimilation of proteinaceous substrates. The chain is Alkaline protease 1 (alp1) from Aspergillus clavatus (strain ATCC 1007 / CBS 513.65 / DSM 816 / NCTC 3887 / NRRL 1 / QM 1276 / 107).